The sequence spans 436 residues: MVIEEWKKSGIATKFPTYRNSALITTHSWQKGKRQDDGAEGLWRINDGIYDFTSFIDKHPGGPFWIRETKGTDITEAFEAHHLTTAPEKMIAKYKVRDAAEPRIYTLTLEEGGFYKTLKERVREQLKTIDKRPKKKSDLIHLGLVVSLYLLGIASAKYNSLLALVLASVALCWTVIVSHNYFHRRDNWQMYAFNLGMMNFAAWRVSHALSHHIYPNSYFDLELSMFEPLLCWVPNPHIKSKLMRYVSWVTEPVAYALAFFIQMGTRIFYSLRHTNILYWHDLLPLTIPIAIYLGTGGSLGIWICVRQWLAMTSIASFSFCLIGLNAAHHDPEIYHEGDANREDRDWGLFQVDTIIDRGDLKWSQFLVLTHFGDHVLHHLFPTLDHGLLPALYPVLYQTLDEFKGHLRECNHIEHMIGQHKQLLRIEPNPRAPGAGK.

One can recognise a Cytochrome b5 heme-binding domain in the interval 16–100; the sequence is PTYRNSALIT…IAKYKVRDAA (85 aa). Residues His59 and His82 each contribute to the heme site.

As to expression, muscle.

Functionally, may play a role in muscle cell metabolism. The chain is Cytochrome b5-related protein (Cyt-b5-r) from Drosophila melanogaster (Fruit fly).